Consider the following 677-residue polypeptide: Methionine--tRNA ligase (677 aa).

Positions 14 to 24 (PYANGAIHLGH) match the 'HIGH' region motif. The Zn(2+) site is built by Cys-145, Cys-148, Cys-158, and Cys-161. The 'KMSKS' region signature appears at 330–334 (KMSKS). Lys-333 is an ATP binding site. Positions 576–677 (DFAKVDLRVA…EGALPGMRVM (102 aa)) constitute a tRNA-binding domain.

It belongs to the class-I aminoacyl-tRNA synthetase family. MetG type 1 subfamily. In terms of assembly, homodimer. Zn(2+) is required as a cofactor.

It is found in the cytoplasm. It catalyses the reaction tRNA(Met) + L-methionine + ATP = L-methionyl-tRNA(Met) + AMP + diphosphate. Is required not only for elongation of protein synthesis but also for the initiation of all mRNA translation through initiator tRNA(fMet) aminoacylation. The sequence is that of Methionine--tRNA ligase from Saccharophagus degradans (strain 2-40 / ATCC 43961 / DSM 17024).